We begin with the raw amino-acid sequence, 1762 residues long: Lysine-specific demethylase 3B (1762 aa).

Ala-2 is modified (N-acetylalanine). Disordered regions lie at residues 253-350 (MDSS…FVPQ) and 426-468 (TTAS…NSSL). A compositionally biased stretch (basic and acidic residues) spans 299–310 (ATKKLKGDRGEV). The segment covering 426–435 (TTASSTPTTV) has biased composition (low complexity). Polar residues predominate over residues 453–465 (GSWSQASGENSRN). Phosphoserine is present on residues Ser-493, Ser-547, Ser-557, and Ser-561. The tract at residues 574-613 (SVLGADTQPGPKAGSSVDRKVPAESMPTLTPAFPRSLLNT) is disordered. Thr-615 carries the post-translational modification Phosphothreonine. A compositionally biased stretch (polar residues) spans 713 to 746 (TGSPSLSAVGNGRSSSPTNSLTQPIEMPTLSSSP). The segment at 713–763 (TGSPSLSAVGNGRSSSPTNSLTQPIEMPTLSSSPTEERPTVGPGQQDNPLL) is disordered. Phosphoserine occurs at positions 767, 774, and 779. A Glycyl lysine isopeptide (Lys-Gly) (interchain with G-Cter in SUMO2) cross-link involves residue Lys-789. Residue Ser-799 is modified to Phosphoserine. Residues 806–853 (ACRQDSDSSTNSDLSDLSDSEEQLQAKSGLKGIPEHLMGKLGPNGERS) form a disordered region. Residues 1032 to 1057 (CDVCETTLFNIHWVCRKCGFGVCLDC) form a C6-type zinc finger. The segment covering 1146 to 1163 (QLPSVTPSASSGNETTFS) has biased composition (polar residues). The tract at residues 1146–1217 (QLPSVTPSAS…AIRPPCPDTA (72 aa)) is disordered. 2 positions are modified to phosphoserine: Ser-1254 and Ser-1260. Residues 1285–1306 (SNSKTEGSSLRDLLHSGPGKLP) are disordered. The LXXLL motif signature appears at 1294–1298 (LRDLL). The region spanning 1499 to 1722 (MPTRFEDLME…HCFRLTQEFR (224 aa)) is the JmjC domain. Fe cation is bound by residues His-1561, Asp-1563, and His-1690.

The protein belongs to the JHDM2 histone demethylase family. Fe(2+) serves as cofactor.

It localises to the nucleus. The enzyme catalyses N(6),N(6)-dimethyl-L-lysyl(9)-[histone H3] + 2 2-oxoglutarate + 2 O2 = L-lysyl(9)-[histone H3] + 2 formaldehyde + 2 succinate + 2 CO2. In terms of biological role, histone demethylase that specifically demethylates 'Lys-9' of histone H3, thereby playing a central role in histone code. Demethylation of Lys residue generates formaldehyde and succinate May have tumor suppressor activity. The protein is Lysine-specific demethylase 3B (Kdm3b) of Mus musculus (Mouse).